Here is a 303-residue protein sequence, read N- to C-terminus: Oxygen-dependent coproporphyrinogen-III oxidase (303 aa).

A substrate-binding site is contributed by Ser93. Positions 97 and 107 each coordinate a divalent metal cation. Residue His107 is the Proton donor of the active site. Residue 109–111 (NVR) coordinates substrate. His146 and His176 together coordinate a divalent metal cation. The segment at 241–276 (YVEFNLVYDRGTLFGLQSGGRTESILMSLPPQVRWG) is important for dimerization. 259–261 (GGR) contributes to the substrate binding site.

This sequence belongs to the aerobic coproporphyrinogen-III oxidase family. Homodimer. A divalent metal cation serves as cofactor.

It localises to the cytoplasm. It catalyses the reaction coproporphyrinogen III + O2 + 2 H(+) = protoporphyrinogen IX + 2 CO2 + 2 H2O. The protein operates within porphyrin-containing compound metabolism; protoporphyrin-IX biosynthesis; protoporphyrinogen-IX from coproporphyrinogen-III (O2 route): step 1/1. Its function is as follows. Involved in the heme biosynthesis. Catalyzes the aerobic oxidative decarboxylation of propionate groups of rings A and B of coproporphyrinogen-III to yield the vinyl groups in protoporphyrinogen-IX. This chain is Oxygen-dependent coproporphyrinogen-III oxidase, found in Pseudomonas entomophila (strain L48).